Here is a 162-residue protein sequence, read N- to C-terminus: ATP synthase subunit delta, mitochondrial (162 aa).

A mitochondrion-targeting transit peptide spans 1 to 24 (MFSVARTAIRGAARPAVRIARRGY).

As to quaternary structure, F-type ATP synthases have 2 components, the catalytic core F(1) and the membrane-embedded component F(0), linked together by a central stalk and a peripheral stalk. The central stalk, also called rotor shaft, is often seen as part of F(1). The peripheral stalk is seen as part of F(0). F(0) contains the membrane channel next to the rotor. F-type ATP synthases form dimers but each monomer functions independently in ATP generation. The dimer consists of 17 different polypeptides: ATP1 (subunit alpha, 3 molecules per monomer, part of F(1)), ATP2 (subunit beta, 3 copies per monomer, part of F(1)), ATP3 (subunit gamma, part of the central stalk), ATP4 (subunit b, part of the peripheral stalk), ATP5/OSCP (subunit 5/OSCP, part of the peripheral stalk), ATP6 (subunit a, part of the peripheral stalk), ATP7 (subunit d, part of the peripheral stalk), ATP8 (subunit 8, part of the peripheral stalk), OLI1 (subunit c, part of the rotor, 10 molecules per monomer), ATP14 (subunit h, part of the peripheral stalk), ATP15 (subunit epsilon, part of the central stalk), ATP16 (subunit delta, part of the central stalk), ATP17 (subunit f, part of the peripheral stalk), ATP18 (subunit i/j, part of the peripheral stalk), ATP19 (subunit k, dimer-specific, at interface between monomers), ATP20 (subunit g, at interface between monomers), TIM11 (subunit e, at interface between monomers).

It is found in the mitochondrion inner membrane. Functionally, mitochondrial membrane ATP synthase (F(1)F(0) ATP synthase or Complex V) produces ATP from ADP in the presence of a proton gradient across the membrane which is generated by electron transport complexes of the respiratory chain. F-type ATP synthases consist of two structural domains, F(1) - containing the extramembraneous catalytic core, and F(0) - containing the membrane proton channel, linked together by a central stalk and a peripheral stalk. During catalysis, ATP synthesis in the catalytic domain of F(1) is coupled via a rotary mechanism of the central stalk subunits to proton translocation. Part of the complex F(1) domain and the central stalk which is part of the complex rotary element. Rotation of the central stalk against the surrounding alpha/ATP1(3)beta/ATP2(3) subunits leads to hydrolysis of ATP in three separate catalytic sites on the beta/ATP2 subunits. This chain is ATP synthase subunit delta, mitochondrial, found in Yarrowia lipolytica (strain CLIB 122 / E 150) (Yeast).